A 330-amino-acid polypeptide reads, in one-letter code: MKQVVYTASPESQQIHAWQLNNEGALTLLQVVDAPGQVQPMVVSPDKSFLYVGVRPDFRVVAYQIDAEGKLKEAGHAPLPGSPTHISTDRQGRFIFVGSYNDACVSVTPIGENGLPGEPLQVVKGLEGCHSANIDLNNQTLFVPALKQDRIALFSLDKQGKLTPRAQAEVKTRSGAGPRHMAFHPNQRYAYSVNELDSSVDVWDISGDEVKKVQSVDALPEGFSDTRWAADIHITPDGRHLYSCDRTASNITIFSISAEGSSLKVEGYQPTETQPRGFNIDHSGQYLVAAGQKSHHIEVYKISADRGLLQPLARYAVGQGPMWVVINKLD.

The protein belongs to the cycloisomerase 2 family.

The catalysed reaction is 6-phospho-D-glucono-1,5-lactone + H2O = 6-phospho-D-gluconate + H(+). Its pathway is carbohydrate degradation; pentose phosphate pathway; D-ribulose 5-phosphate from D-glucose 6-phosphate (oxidative stage): step 2/3. In terms of biological role, catalyzes the hydrolysis of 6-phosphogluconolactone to 6-phosphogluconate. The sequence is that of 6-phosphogluconolactonase from Erwinia tasmaniensis (strain DSM 17950 / CFBP 7177 / CIP 109463 / NCPPB 4357 / Et1/99).